Here is a 424-residue protein sequence, read N- to C-terminus: MKLEMICTGEEVLSGQIVDTNAAWFASTMMEHGIEIQRRVTVGDRLEDLIAVFQERSLHADVILVNGGLGPTSDDMSAEAMAKAKGESLVENSEWRQRLEDWFTRNNREMPVSNLKQAMLPVSAVMVDNPVGTACGFRVKLNRAWLFFTPGVPFELKHMVKEQFIPFIRDEFNLDAKVALKKLLTIGHGESALADKIEPLELPEGITIGYRSSMPHIEIKIFARGEKAIALLPRVAGHIKMVLGTAVVAEDKATLAEEIHFRLLNSGLTLSAAESCTGGMITSQLVDFPGSSSYLQHGLVTYSNESKVRVLGVNPATLDDHGAVSIPTVEEMAKGARAILDSDFALATSGIAGPDGGTEDKPVGTVAIALATRSGVYSQMIKLPRRSRDLVRSLSAAVAYDMLRRELLSEAVIVDYQSIGRFSK.

The protein belongs to the CinA family. As to quaternary structure, homodimer.

It carries out the reaction beta-nicotinamide D-ribonucleotide + H2O = nicotinate beta-D-ribonucleotide + NH4(+). Its function is as follows. One of the key enzymes of the pyridine nucleotide cycle which permits cells to recycle the by products of NAD consumption back to NAD. Has no activity on NAD, NADP, nicotinamide or nicotinamide riboside. This chain is Nicotinamide-nucleotide amidohydrolase PncC (pncC), found in Shewanella oneidensis (strain ATCC 700550 / JCM 31522 / CIP 106686 / LMG 19005 / NCIMB 14063 / MR-1).